The chain runs to 221 residues: Small ribosomal subunit protein uS5 (221 aa).

Residues 46 to 109 (IKDEVIDIKR…INAKLNIMEI (64 aa)) enclose the S5 DRBM domain.

Belongs to the universal ribosomal protein uS5 family. As to quaternary structure, part of the 30S ribosomal subunit. Contacts protein S4.

Functionally, with S4 and S12 plays an important role in translational accuracy. The sequence is that of Small ribosomal subunit protein uS5 from Thermoplasma volcanium (strain ATCC 51530 / DSM 4299 / JCM 9571 / NBRC 15438 / GSS1).